The following is a 137-amino-acid chain: Altered inheritance of mitochondria protein 11 (137 aa).

A run of 2 helical transmembrane segments spans residues 20 to 37 (YGAA…SRAI) and 66 to 88 (LTYA…CWAL).

It belongs to the AIM11 family.

It localises to the membrane. The protein is Altered inheritance of mitochondria protein 11 (AIM11) of Saccharomyces cerevisiae (strain RM11-1a) (Baker's yeast).